We begin with the raw amino-acid sequence, 355 residues long: Fructose-1,6-bisphosphatase class 1 (355 aa).

Residues Glu-90, Asp-109, Leu-111, and Asp-112 each contribute to the Mg(2+) site. Substrate contacts are provided by residues 112 to 115 (DGSS), Asn-204, and 256 to 258 (YLY). Position 276 (Glu-276) interacts with Mg(2+).

This sequence belongs to the FBPase class 1 family. Homotetramer. The cofactor is Mg(2+).

The protein resides in the cytoplasm. The catalysed reaction is beta-D-fructose 1,6-bisphosphate + H2O = beta-D-fructose 6-phosphate + phosphate. The protein operates within carbohydrate biosynthesis; gluconeogenesis. The polypeptide is Fructose-1,6-bisphosphatase class 1 (Acidiphilium cryptum (strain JF-5)).